A 574-amino-acid chain; its full sequence is Septation ring formation regulator EzrA (574 aa).

The Extracellular portion of the chain corresponds to 1-7; it reads MPTGTII. The helical transmembrane segment at 8–26 threads the bilayer; it reads LIVSIVIILIIAYVACLIV. Topologically, residues 27-574 are cytoplasmic; it reads RKRNDNLLVA…YEKTREAIRY (548 aa). Residues 105 to 189 adopt a coiled-coil conformation; that stretch reads SAKNAIDSID…IEVEFSEFVM (85 aa).

This sequence belongs to the EzrA family.

It is found in the cell membrane. Negative regulator of FtsZ ring formation; modulates the frequency and position of FtsZ ring formation. Inhibits FtsZ ring formation at polar sites. Interacts either with FtsZ or with one of its binding partners to promote depolymerization. This chain is Septation ring formation regulator EzrA, found in Streptococcus suis (strain 98HAH33).